The chain runs to 99 residues: Beta-2-microglobulin (99 aa).

An Ig-like C1-type domain is found at 5–93 (PRVQVYSRHP…HITLSEPKIV (89 aa)). An intrachain disulfide couples Cys-25 to Cys-80.

Belongs to the beta-2-microglobulin family. Heterodimer of an alpha chain and a beta chain. Beta-2-microglobulin is the beta-chain of major histocompatibility complex class I molecules.

It localises to the secreted. Its function is as follows. Component of the class I major histocompatibility complex (MHC). Involved in the presentation of peptide antigens to the immune system. The protein is Beta-2-microglobulin (B2M) of Cavia porcellus (Guinea pig).